The sequence spans 316 residues: Pantothenate kinase (316 aa).

95–102 (GSVAVGKS) is an ATP binding site.

This sequence belongs to the prokaryotic pantothenate kinase family.

The protein resides in the cytoplasm. The catalysed reaction is (R)-pantothenate + ATP = (R)-4'-phosphopantothenate + ADP + H(+). The protein operates within cofactor biosynthesis; coenzyme A biosynthesis; CoA from (R)-pantothenate: step 1/5. This Shewanella baltica (strain OS223) protein is Pantothenate kinase.